We begin with the raw amino-acid sequence, 1627 residues long: DNA topoisomerase 2-beta (1627 aa).

ATP-binding positions include Asn-117, Asn-146, Ser-174–Asn-176, and Gly-187–Lys-194. Residues Lys-368–Lys-370 form an interaction with DNA region. Gln-402–Lys-404 is a binding site for ATP. One can recognise a Toprim domain in the interval Cys-481–Glu-598. 3 residues coordinate Mg(2+): Glu-487, Asp-567, and Asp-569. Positions Ile-741–Leu-1194 constitute a Topo IIA-type catalytic domain. Tyr-831 functions as the O-(5'-phospho-DNA)-tyrosine intermediate in the catalytic mechanism. Residues Lys-1016–Ser-1025 form an interaction with DNA region. 4 disordered regions span residues Ala-1115–Ser-1144, Lys-1224–Val-1248, Glu-1283–Leu-1365, and Asp-1378–Asn-1627. The span at Asn-1131 to Ser-1144 shows a compositional bias: low complexity. Residues Thr-1296–Lys-1305 are compositionally biased toward polar residues. The segment covering Pro-1339–Ser-1349 has biased composition (basic and acidic residues). 2 stretches are compositionally biased toward acidic residues: residues Lys-1381–Ala-1392 and Arg-1412–Asp-1428. Composition is skewed to basic and acidic residues over residues Pro-1436–Gln-1448 and Lys-1462–Asp-1471. Composition is skewed to basic residues over residues Gly-1542–Thr-1552 and Lys-1566–Lys-1578. The segment covering Glu-1616–Asn-1627 has biased composition (acidic residues).

Belongs to the type II topoisomerase family. In terms of assembly, homodimer. It depends on Mg(2+) as a cofactor. The cofactor is Mn(2+). Requires Ca(2+) as cofactor.

It is found in the nucleus. Its subcellular location is the nucleolus. It localises to the nucleoplasm. The catalysed reaction is ATP-dependent breakage, passage and rejoining of double-stranded DNA.. Functionally, key decatenating enzyme that alters DNA topology by binding to two double-stranded DNA molecules, generating a double-stranded break in one of the strands, passing the intact strand through the broken strand, and religating the broken strand. Plays a role in B-cell differentiation. The protein is DNA topoisomerase 2-beta (TOP2B) of Gallus gallus (Chicken).